The primary structure comprises 230 residues: Demethylmenaquinone methyltransferase (230 aa).

Residues threonine 62, aspartate 80, 100-101 (DA), and serine 117 contribute to the S-adenosyl-L-methionine site.

It belongs to the class I-like SAM-binding methyltransferase superfamily. MenG/UbiE family.

It carries out the reaction a 2-demethylmenaquinol + S-adenosyl-L-methionine = a menaquinol + S-adenosyl-L-homocysteine + H(+). It participates in quinol/quinone metabolism; menaquinone biosynthesis; menaquinol from 1,4-dihydroxy-2-naphthoate: step 2/2. Its function is as follows. Methyltransferase required for the conversion of demethylmenaquinol (DMKH2) to menaquinol (MKH2). The chain is Demethylmenaquinone methyltransferase from Mycobacterium sp. (strain KMS).